Reading from the N-terminus, the 156-residue chain is Oleosin Zm-I (156 aa).

Positions 1–30 are disordered; sequence MADHHRGATGGGGGYGDLQRGGGMHGEAQQ. A2 is modified (N-acetylalanine). The segment at 2 to 42 is polar; sequence ADHHRGATGGGGGYGDLQRGGGMHGEAQQQQKQGAMMTALK. A compositionally biased stretch (gly residues) spans 8-25; that stretch reads ATGGGGGYGDLQRGGGMH. Positions 43 to 114 are hydrophobic; the sequence is AATAATFGGS…AALSVFSWMY (72 aa). The next 2 membrane-spanning stretches (helical) occupy residues 51-71 and 95-115; these read GSMLVLSGLILAGTVIALTVA and GFVTSGGLGVAALSVFSWMYK.

The protein belongs to the oleosin family. Post-translationally, the N-terminus is blocked.

The protein resides in the lipid droplet. It is found in the membrane. May have a structural role to stabilize the lipid body during desiccation of the seed by preventing coalescence of the oil. Probably interacts with both lipid and phospholipid moieties of lipid bodies. May also provide recognition signals for specific lipase anchorage in lipolysis during seedling growth. This is Oleosin Zm-I (OLE16) from Zea mays (Maize).